Consider the following 379-residue polypeptide: (R)-2-hydroxyglutaryl-CoA dehydratase, subunit beta (379 aa).

It belongs to the FldB/FldC dehydratase alpha/beta subunit family. The (R)-2-hydroxyglutaryl-CoA dehydratase enzyme system is a heterodimer composed of an alpha subunit (HgdA) and a beta subunit (HgdB). The cofactor is [4Fe-4S] cluster. FMN is required as a cofactor. Requires Mg(2+) as cofactor.

The protein resides in the cytoplasm. It carries out the reaction (R)-2-hydroxyglutaryl-CoA = (2E)-glutaconyl-CoA + H2O. It participates in amino-acid degradation; L-glutamate degradation via hydroxyglutarate pathway; crotonoyl-CoA from L-glutamate: step 4/5. Activated by the HgdC. Reversibly inactivated by oxidants such as 2-nitrophenol, 3-nitrophenol, 4-nitrophenol, 4-nitrobenzoate, carbonyl cyanide 4-(trifluoromethoxy)phenylhydrazone (FCCP) and chloramphenicol. Irreversibly inactivated by oxidants such as hydroxylamine and nitrite. Its function is as follows. Involved in the fermentation of L-glutamate via the hydroxyglutarate pathway. Catalyzes the reversible syn-elimination of water from (R)-2-hydroxyglutaryl-CoA to yield (E)-glutaconyl-CoA. The dehydration mechanism involves a transient one electron reduction of the thioester from (R)-2-hydroxyglutaryl-CoA, generating a ketyl radical. Prior to (E)-glutaconyl-CoA formation, the ketyl radical is subsequently reoxidized by electron transfer back to the HgdA-HgdB complex (CompD) to avoid change in oxidation state of the substrate. The appropriate redox state of dehydratase HgdA-HgdB complex (CompD) is maintained by HgdC (CompA) via hydrolysis of ATP and ATP-dependent electron transfer. Since the electron is recycled, the dehydratase is able to perform several turnovers with only catalytic amounts of ATP and substoichiometric amounts of HgdC (CompA). The sequence is that of (R)-2-hydroxyglutaryl-CoA dehydratase, subunit beta from Acidaminococcus fermentans (strain ATCC 25085 / DSM 20731 / CCUG 9996 / CIP 106432 / VR4).